The primary structure comprises 138 residues: Transcription antitermination protein NusB (138 aa).

This sequence belongs to the NusB family.

Functionally, involved in transcription antitermination. Required for transcription of ribosomal RNA (rRNA) genes. Binds specifically to the boxA antiterminator sequence of the ribosomal RNA (rrn) operons. The sequence is that of Transcription antitermination protein NusB from Helicobacter pylori (strain P12).